Here is a 423-residue protein sequence, read N- to C-terminus: uncharacterized protein (423 aa).

Belongs to the IIV-6 198R family.

This is an uncharacterized protein from Aedes vexans (Inland floodwater mosquito).